The sequence spans 344 residues: Arginine N-succinyltransferase (344 aa).

Leu-125 lines the succinyl-CoA pocket. The Proton donor role is filled by His-229.

The protein belongs to the arginine N-succinyltransferase family.

The catalysed reaction is succinyl-CoA + L-arginine = N(2)-succinyl-L-arginine + CoA + H(+). The protein operates within amino-acid degradation; L-arginine degradation via AST pathway; L-glutamate and succinate from L-arginine: step 1/5. Its function is as follows. Catalyzes the transfer of succinyl-CoA to arginine to produce N(2)-succinylarginine. This is Arginine N-succinyltransferase from Enterobacter sp. (strain 638).